We begin with the raw amino-acid sequence, 143 residues long: Nucleoside diphosphate kinase (143 aa).

Positions 11, 59, 87, 93, 104, and 114 each coordinate ATP. His117 acts as the Pros-phosphohistidine intermediate in catalysis.

The protein belongs to the NDK family. As to quaternary structure, homotetramer. The cofactor is Mg(2+).

The protein resides in the cytoplasm. It catalyses the reaction a 2'-deoxyribonucleoside 5'-diphosphate + ATP = a 2'-deoxyribonucleoside 5'-triphosphate + ADP. The catalysed reaction is a ribonucleoside 5'-diphosphate + ATP = a ribonucleoside 5'-triphosphate + ADP. Its function is as follows. Major role in the synthesis of nucleoside triphosphates other than ATP. The ATP gamma phosphate is transferred to the NDP beta phosphate via a ping-pong mechanism, using a phosphorylated active-site intermediate. The chain is Nucleoside diphosphate kinase from Shewanella loihica (strain ATCC BAA-1088 / PV-4).